An 87-amino-acid polypeptide reads, in one-letter code: DNA-directed RNA polymerase subunit omega (87 aa).

This sequence belongs to the RNA polymerase subunit omega family. In terms of assembly, the RNAP catalytic core consists of 2 alpha, 1 beta, 1 beta' and 1 omega subunit. When a sigma factor is associated with the core the holoenzyme is formed, which can initiate transcription.

It carries out the reaction RNA(n) + a ribonucleoside 5'-triphosphate = RNA(n+1) + diphosphate. In terms of biological role, promotes RNA polymerase assembly. Latches the N- and C-terminal regions of the beta' subunit thereby facilitating its interaction with the beta and alpha subunits. In Pseudomonas savastanoi pv. phaseolicola (strain 1448A / Race 6) (Pseudomonas syringae pv. phaseolicola (strain 1448A / Race 6)), this protein is DNA-directed RNA polymerase subunit omega.